Consider the following 254-residue polypeptide: Ribosomal RNA large subunit methyltransferase E (254 aa).

Over residues 1 to 18 the composition is skewed to gly residues; it reads MTNSGKTGGKSGKGGTGG. Positions 1–26 are disordered; that stretch reads MTNSGKTGGKSGKGGTGGARALKVRV. 5 residues coordinate S-adenosyl-L-methionine: Gly89, Trp91, Asp119, Asp135, and Asp159. The active-site Proton acceptor is Lys199.

It belongs to the class I-like SAM-binding methyltransferase superfamily. RNA methyltransferase RlmE family.

It localises to the cytoplasm. It catalyses the reaction uridine(2552) in 23S rRNA + S-adenosyl-L-methionine = 2'-O-methyluridine(2552) in 23S rRNA + S-adenosyl-L-homocysteine + H(+). Specifically methylates the uridine in position 2552 of 23S rRNA at the 2'-O position of the ribose in the fully assembled 50S ribosomal subunit. This Parvibaculum lavamentivorans (strain DS-1 / DSM 13023 / NCIMB 13966) protein is Ribosomal RNA large subunit methyltransferase E.